The chain runs to 123 residues: Probable cytochrome c 2.2 (123 aa).

Positions 1–21 (MGKKKSDTASGGAIPEGDNEK) are disordered. The heme c site is built by cysteine 30, cysteine 33, histidine 34, and methionine 95.

This sequence belongs to the cytochrome c family. Binds 1 heme c group covalently per subunit.

It localises to the mitochondrion intermembrane space. In terms of biological role, electron carrier protein. The oxidized form of the cytochrome c heme group can accept an electron from the heme group of the cytochrome c1 subunit of cytochrome reductase. Cytochrome c then transfers this electron to the cytochrome oxidase complex, the final protein carrier in the mitochondrial electron-transport chain. The sequence is that of Probable cytochrome c 2.2 (cyc-2.2) from Caenorhabditis elegans.